A 503-amino-acid polypeptide reads, in one-letter code: Basic immunoglobulin-like variable motif-containing protein (503 aa).

Positions Met-1–Glu-26 are enriched in basic and acidic residues. Disordered regions lie at residues Met-1–Val-33, Thr-152–Gln-184, and Glu-438–Phe-469. The segment covering Ser-155–Ser-172 has biased composition (basic residues). The span at Asp-173 to Gln-184 shows a compositional bias: basic and acidic residues.

Belongs to the BIVM family. In terms of tissue distribution, widely expressed. Expressed at higher level in spleen, ovary, small intestine, colon, peripheral blood leukocytes and liver. Also expressed in testis, ovary, aorta, appendix, trachea, pituitary gland, bladder, uterus, spinal cord, salivary gland, stomach, mammary gland and bone marrow. Weakly or not expressed in fetal spleen, adult thymus and certain cancer cell lines.

The protein localises to the cytoplasm. Its subcellular location is the nucleus. The sequence is that of Basic immunoglobulin-like variable motif-containing protein (BIVM) from Homo sapiens (Human).